A 190-amino-acid chain; its full sequence is Putative serine carboxypeptidase-like 54 (190 aa).

The N-terminal stretch at 1–25 (MATKTFSLPFLLIVCIFSQLSSTFG) is a signal peptide. N-linked (GlcNAc...) asparagine glycosylation is found at N58, N59, and N105.

Belongs to the peptidase S10 family.

It localises to the secreted. In Arabidopsis thaliana (Mouse-ear cress), this protein is Putative serine carboxypeptidase-like 54 (SCPL54).